We begin with the raw amino-acid sequence, 355 residues long: uncharacterized protein (355 aa).

Positions 1 to 104 are disordered; it reads MGTKGLPLYP…EQAKTVQGGR (104 aa). Lys19 carries the N6-acetyllysine modification. Residues 45–54 show a composition bias toward acidic residues; the sequence is EEGTDLEGDM. Ser175 is modified (phosphoserine). Disordered stretches follow at residues 247-310 and 325-355; these read PRGS…AAYK and SITSLSSRTTELPAADPFALAPFPSKSGKKP. Tyr293 is subject to Phosphotyrosine. Ser294 is subject to Phosphoserine. Positions 325–334 are enriched in polar residues; that stretch reads SITSLSSRTT. Low complexity predominate over residues 336–348; it reads LPAADPFALAPFP.

This is an uncharacterized protein from Homo sapiens (Human).